A 90-amino-acid chain; its full sequence is Signal recognition particle 19 kDa protein (90 aa).

This sequence belongs to the SRP19 family. Part of the signal recognition particle protein translocation system, which is composed of SRP and FtsY. Archaeal SRP consists of a 7S RNA molecule of 300 nucleotides and two protein subunits: SRP54 and SRP19.

The protein localises to the cytoplasm. Involved in targeting and insertion of nascent membrane proteins into the cytoplasmic membrane. Binds directly to 7S RNA and mediates binding of the 54 kDa subunit of the SRP. The sequence is that of Signal recognition particle 19 kDa protein from Methanococcus aeolicus (strain ATCC BAA-1280 / DSM 17508 / OCM 812 / Nankai-3).